A 177-amino-acid chain; its full sequence is ATP synthase subunit delta (177 aa).

The protein belongs to the ATPase delta chain family. In terms of assembly, F-type ATPases have 2 components, F(1) - the catalytic core - and F(0) - the membrane proton channel. F(1) has five subunits: alpha(3), beta(3), gamma(1), delta(1), epsilon(1). F(0) has three main subunits: a(1), b(2) and c(10-14). The alpha and beta chains form an alternating ring which encloses part of the gamma chain. F(1) is attached to F(0) by a central stalk formed by the gamma and epsilon chains, while a peripheral stalk is formed by the delta and b chains.

It is found in the cell inner membrane. Its function is as follows. F(1)F(0) ATP synthase produces ATP from ADP in the presence of a proton or sodium gradient. F-type ATPases consist of two structural domains, F(1) containing the extramembraneous catalytic core and F(0) containing the membrane proton channel, linked together by a central stalk and a peripheral stalk. During catalysis, ATP synthesis in the catalytic domain of F(1) is coupled via a rotary mechanism of the central stalk subunits to proton translocation. In terms of biological role, this protein is part of the stalk that links CF(0) to CF(1). It either transmits conformational changes from CF(0) to CF(1) or is implicated in proton conduction. This Pectobacterium atrosepticum (strain SCRI 1043 / ATCC BAA-672) (Erwinia carotovora subsp. atroseptica) protein is ATP synthase subunit delta.